Consider the following 164-residue polypeptide: Translocator protein homolog (164 aa).

The next 5 membrane-spanning stretches (helical) occupy residues 16 to 34 (WSAS…NSYK), 52 to 72 (SAFG…SHLA), 89 to 106 (ILYI…PLFY), 112 to 132 (KLAL…AKTW), and 141 to 163 (KWLI…YCLL).

This sequence belongs to the TspO/BZRP family.

The protein resides in the mitochondrion membrane. Its function is as follows. May play a role in the transport of porphyrins and heme. The protein is Translocator protein homolog of Schizosaccharomyces pombe (strain 972 / ATCC 24843) (Fission yeast).